Here is a 256-residue protein sequence, read N- to C-terminus: MLRIADKTFDSHLFTGTGKFASSQLMVEAIRASGSQLVTLAMKRVDLRQHNDAILEPLIAAGVTLLPNTSGAKTAEEAIFAAHLAREALGTNWLKLEIHPDARWLLPDPIETLKAAETLVQQGFVVLPYCGADPVLCKRLEEVGCAAVMPLGAPIGSNQGLETRAMLEIIIQQATVPVVVDAGIGVPSHAAQALEMGADAVLVNTAIAVADDPVNMAKAFRLAVEAGLLARQSGPGSRSHFAHATSPLTGFLEASA.

Residue lysine 95 is the Schiff-base intermediate with DXP of the active site. Residues glycine 156, 182–183 (AG), and 204–205 (NT) contribute to the 1-deoxy-D-xylulose 5-phosphate site.

It belongs to the ThiG family. As to quaternary structure, homotetramer. Forms heterodimers with either ThiH or ThiS.

The protein localises to the cytoplasm. The catalysed reaction is [ThiS sulfur-carrier protein]-C-terminal-Gly-aminoethanethioate + 2-iminoacetate + 1-deoxy-D-xylulose 5-phosphate = [ThiS sulfur-carrier protein]-C-terminal Gly-Gly + 2-[(2R,5Z)-2-carboxy-4-methylthiazol-5(2H)-ylidene]ethyl phosphate + 2 H2O + H(+). It participates in cofactor biosynthesis; thiamine diphosphate biosynthesis. Functionally, catalyzes the rearrangement of 1-deoxy-D-xylulose 5-phosphate (DXP) to produce the thiazole phosphate moiety of thiamine. Sulfur is provided by the thiocarboxylate moiety of the carrier protein ThiS. In vitro, sulfur can be provided by H(2)S. The protein is Thiazole synthase of Escherichia coli (strain 55989 / EAEC).